Here is a 636-residue protein sequence, read N- to C-terminus: DNA mismatch repair protein MutL (636 aa).

The span at 332–344 shows a compositional bias: basic and acidic residues; it reads HAGEQGDSLRTDI. 2 disordered regions span residues 332–360 and 417–443; these read HAGE…PADN and ASAP…SDDA. A compositionally biased stretch (low complexity) spans 417 to 437; the sequence is ASAPADAAPAQASEPAAAPQA.

Belongs to the DNA mismatch repair MutL/HexB family.

This protein is involved in the repair of mismatches in DNA. It is required for dam-dependent methyl-directed DNA mismatch repair. May act as a 'molecular matchmaker', a protein that promotes the formation of a stable complex between two or more DNA-binding proteins in an ATP-dependent manner without itself being part of a final effector complex. In Ralstonia nicotianae (strain ATCC BAA-1114 / GMI1000) (Ralstonia solanacearum), this protein is DNA mismatch repair protein MutL.